Reading from the N-terminus, the 273-residue chain is Dermonecrotic toxin LamSicTox-alphaIC1 (273 aa).

The active site involves H5. Mg(2+)-binding residues include E25 and D27. H41 functions as the Nucleophile in the catalytic mechanism. 2 disulfides stabilise this stretch: C45–C51 and C47–C190. D85 is a Mg(2+) binding site.

It belongs to the arthropod phospholipase D family. Class II subfamily. Mg(2+) serves as cofactor. In terms of tissue distribution, expressed by the venom gland.

The protein resides in the secreted. It catalyses the reaction an N-(acyl)-sphingosylphosphocholine = an N-(acyl)-sphingosyl-1,3-cyclic phosphate + choline. The enzyme catalyses an N-(acyl)-sphingosylphosphoethanolamine = an N-(acyl)-sphingosyl-1,3-cyclic phosphate + ethanolamine. The catalysed reaction is a 1-acyl-sn-glycero-3-phosphocholine = a 1-acyl-sn-glycero-2,3-cyclic phosphate + choline. It carries out the reaction a 1-acyl-sn-glycero-3-phosphoethanolamine = a 1-acyl-sn-glycero-2,3-cyclic phosphate + ethanolamine. Dermonecrotic toxins cleave the phosphodiester linkage between the phosphate and headgroup of certain phospholipids (sphingolipid and lysolipid substrates), forming an alcohol (often choline) and a cyclic phosphate. This toxin acts on sphingomyelin (SM). It may also act on ceramide phosphoethanolamine (CPE), lysophosphatidylcholine (LPC) and lysophosphatidylethanolamine (LPE), but not on lysophosphatidylserine (LPS), and lysophosphatidylglycerol (LPG). It acts by transphosphatidylation, releasing exclusively cyclic phosphate products as second products. Induces dermonecrosis, hemolysis, increased vascular permeability, edema, inflammatory response, and platelet aggregation. This is Dermonecrotic toxin LamSicTox-alphaIC1 from Loxosceles amazonica (Recluse spider).